We begin with the raw amino-acid sequence, 78 residues long: Consomatin Nc1 (78 aa).

A signal peptide spans 1-22 (MQTAYWVMVMVMVWITAPLSEG). The propeptide occupies 23–59 (GKPNDVIRGLVPDDLTPQLILRSLISRRRSDKDVGKR). Glu-61 is modified (4-carboxyglutamate). The cysteines at positions 62 and 67 are disulfide-linked. The residue at position 64 (Trp-64) is a D-tryptophan. Position 70 is a 4-hydroxyproline (Pro-70). The propeptide occupies 71–78 (LSRRHDLG).

It belongs to the conotoxin C superfamily. Consomatin family. Expressed by the venom duct.

The protein resides in the secreted. Its function is as follows. Moderately activates human somatostatin receptors (SSTR) with a preferential activation of SSTR1 and SSTR4. In vivo, does not cause behavioral changes in mice within a few minutes of intracranial injection, but causes a progressive loss of movement thereafter. Four to five hours after injection, mice recover, even with the highest dose tested. Shows antinociception and antihyperalgesia activities in two mouse models of acute pain, most probably by acting outside the central nervous system. The sequence is that of Consomatin Nc1 from Conus neocostatus (Cone snail).